A 398-amino-acid polypeptide reads, in one-letter code: Putative FBD-associated F-box protein At5g56700 (398 aa).

One can recognise an F-box domain in the interval Met1 to Tyr47. The region spanning Trp340–Ile388 is the FBD domain.

In Arabidopsis thaliana (Mouse-ear cress), this protein is Putative FBD-associated F-box protein At5g56700.